A 238-amino-acid polypeptide reads, in one-letter code: Proteasome subunit beta type-6 (238 aa).

Ala-2 is subject to N-acetylalanine. Residues 2–33 constitute a propeptide, removed in mature form; sequence AAALAVRGAVSAPAFGPEALTPDWENREVSTG. Catalysis depends on Thr-34, which acts as the Nucleophile. Thr-68 is modified (phosphothreonine).

This sequence belongs to the peptidase T1B family. In terms of assembly, the 26S proteasome consists of a 20S proteasome core and two 19S regulatory subunits. The 20S proteasome core is a barrel-shaped complex made of 28 subunits that are arranged in four stacked rings. The two outer rings are each formed by seven alpha subunits, and the two inner rings are formed by seven beta subunits. The proteolytic activity is exerted by three beta-subunits PSMB5, PSMB6 and PSMB7.

It is found in the cytoplasm. The protein localises to the nucleus. It carries out the reaction Cleavage of peptide bonds with very broad specificity.. Its function is as follows. Component of the 20S core proteasome complex involved in the proteolytic degradation of most intracellular proteins. This complex plays numerous essential roles within the cell by associating with different regulatory particles. Associated with two 19S regulatory particles, forms the 26S proteasome and thus participates in the ATP-dependent degradation of ubiquitinated proteins. The 26S proteasome plays a key role in the maintenance of protein homeostasis by removing misfolded or damaged proteins that could impair cellular functions, and by removing proteins whose functions are no longer required. Associated with the PA200 or PA28, the 20S proteasome mediates ubiquitin-independent protein degradation. This type of proteolysis is required in several pathways including spermatogenesis (20S-PA200 complex) or generation of a subset of MHC class I-presented antigenic peptides (20S-PA28 complex). Within the 20S core complex, PSMB6 displays a peptidylglutamyl-hydrolyzing activity also termed postacidic or caspase-like activity, meaning that the peptides bond hydrolysis occurs directly after acidic residues. The chain is Proteasome subunit beta type-6 (Psmb6) from Rattus norvegicus (Rat).